The sequence spans 75 residues: UPF0150 protein TM_1313 (75 aa).

This sequence belongs to the UPF0150 family.

In Thermotoga maritima (strain ATCC 43589 / DSM 3109 / JCM 10099 / NBRC 100826 / MSB8), this protein is UPF0150 protein TM_1313.